The following is a 368-amino-acid chain: GDSL esterase/lipase At4g16230 (368 aa).

Positions 1–24 are cleaved as a signal peptide; sequence MSLLVFLCQIIVLSVLFFSEVCLA. The active-site Nucleophile is Ser37. 2 N-linked (GlcNAc...) asparagine glycosylation sites follow: Asn117 and Asn286. Residues Asp329 and His332 contribute to the active site.

Belongs to the 'GDSL' lipolytic enzyme family.

Its subcellular location is the secreted. This is GDSL esterase/lipase At4g16230 from Arabidopsis thaliana (Mouse-ear cress).